The following is a 300-amino-acid chain: Urease accessory protein UreD (300 aa).

Belongs to the UreD family. As to quaternary structure, ureD, UreF and UreG form a complex that acts as a GTP-hydrolysis-dependent molecular chaperone, activating the urease apoprotein by helping to assemble the nickel containing metallocenter of UreC. The UreE protein probably delivers the nickel.

Its subcellular location is the cytoplasm. Its function is as follows. Required for maturation of urease via the functional incorporation of the urease nickel metallocenter. This chain is Urease accessory protein UreD, found in Prochlorococcus marinus (strain MIT 9312).